Consider the following 543-residue polypeptide: MTAHENEVQLFNRGEKVLCYEPDESKARVLYDSKVLAVYERKDAANLRYFDYKIHFQGWNSSWDRNVRAASLLKDNEENRKLQRELAEAAQLQKTGGYSYKDSKTPTLPSSKKKRLARGGHVEDPTADPLDISLPSSKKKRLARGGHVEDPTADPLDISLAHLPATPKPELPAQQKRGARSRDGSGNRSRDGSGNRSRDNSSGRKKQRDKSKGGDKNDDGERRSARSQFSLHVSPKDTHTTDAEKRIHQEDRVMLRISERLREYMEYDYNMVCKLEKQHALPARTPIVTILENFVKQRAVELAIGIKQDSSRARNTLSRNARMEREYDRVMSIVCMLKEVVDGLRIYFEFHLEDHLLYREEKDYALGFLTDNNMKNCSLLLNKSYEFINPSGDNELISMAGNVNGTNGVDGPLLGDIEYENQLQKCLRYIEKNSAKNNIALAYTAAYKLPMEMRGFLRETFSWSLLSEESPPEKSIIFGAPHLARMLVLLPECLNASPISNEKLVDLLPHLDSFINYLENHKEWFDKQNYLDPLIDQGRELSV.

The Chromo domain occupies 10 to 90 (LFNRGEKVLC…KLQRELAEAA (81 aa)). The interval 93–247 (QKTGGYSYKD…THTTDAEKRI (155 aa)) is disordered. Basic and acidic residues-rich tracts occupy residues 180–202 (RSRD…DNSS), 210–224 (KSKG…ERRS), and 234–247 (SPKD…EKRI). An MRG domain is found at 249 to 542 (QEDRVMLRIS…PLIDQGRELS (294 aa)).

As to quaternary structure, component of the male-specific lethal (MSL) histone acetyltransferase complex, composed of mof, mle, msl-1, msl-2 and msl-3 proteins, as well as roX1 and roX2 non-coding RNAs. In terms of processing, ubiquitinated by msl-2.

It localises to the nucleus. Its subcellular location is the chromosome. Component of the male-specific lethal (MSL) histone acetyltransferase complex, a multiprotein complex essential for elevating transcription of the single X chromosome in the male (X chromosome dosage compensation). The MSL complex specifically associates with the single X chromosome in males and mediates formation of H4K16ac, promoting a two-fold activation of X chromosome. Acts as a histone reader that specifically recognizes and binds histone H3 trimethylated at 'Lys-36' (H3K36me3) and histone H4 monomethylated at 'Lys-20' (H4K20me1). Within the MSL complex, mediates the spreading of the MSL complex from initiation sites on the male X chromosome to flanking chromatin. Following initial recruitment of the MSL complex to male X chromosome by msl-2, msl-3 binds H3K36me3 and promotes spreading of the MSL complex in cis. In addition to its role in dosage compensation in males, promotes germline stem cell differentiation in females: recognizes and binds H3K36me3, promoting recruitment of the ATAC complex and transcription of genes, such as RpS19b. This chain is Protein male-specific lethal-3 (msl-3), found in Drosophila virilis (Fruit fly).